A 711-amino-acid polypeptide reads, in one-letter code: Polyribonucleotide nucleotidyltransferase (711 aa).

The FFRR loop; important for RNA binding stretch occupies residues 77 to 80 (FFRR). An interaction with RNase E region spans residues 327 to 331 (LDVRT). Mg(2+) is bound by residues D486 and D492. Residues 553-612 (PRIHTIKINPDKIKDVIGKGGSVIRALTEETGTTIEIEDDGTVKIAATDGEKAKHAIRRI) enclose the KH domain. Positions 622-690 (GRVYTGKVTR…RQGRIRLSIK (69 aa)) constitute an S1 motif domain. Positions 689-711 (IKEATEQSQPAAAPEAPAAEQGE) are disordered. The span at 694–711 (EQSQPAAAPEAPAAEQGE) shows a compositional bias: low complexity.

This sequence belongs to the polyribonucleotide nucleotidyltransferase family. As to quaternary structure, component of the RNA degradosome, which is a multiprotein complex involved in RNA processing and mRNA degradation. Interacts with RNase E (rne). Homotrimer. The homotrimer forms a ring-like structure with a central channel, where RNA molecules can bind. RNA molecules bind between neighboring subunits. Might interact with YicC. Requires Mg(2+) as cofactor. It depends on Mn(2+) as a cofactor.

The protein resides in the cytoplasm. It catalyses the reaction RNA(n+1) + phosphate = RNA(n) + a ribonucleoside 5'-diphosphate. Involved in mRNA degradation. Catalyzes the phosphorolysis of single-stranded polyribonucleotides processively in the 3'- to 5'-direction. Also involved, along with RNase II, in tRNA processing. RNases II and R contribute to rRNA degradation during starvation, while RNase R and PNPase are the major contributors to quality control of rRNA during steady state growth. Contributes to degradation of some small RNAs (sRNA). This Escherichia coli (strain K12) protein is Polyribonucleotide nucleotidyltransferase.